A 506-amino-acid polypeptide reads, in one-letter code: RNA-splicing ligase RtcB homolog (506 aa).

Residues Asp120, Cys123, His228, His260, and His354 each contribute to the Mn(2+) site. 227–231 (NHYAE) serves as a coordination point for GMP. GMP contacts are provided by residues 354 to 355 (HN), 403 to 406 (GGSM), Ser410, 429 to 432 (HGAG), and Lys505. The active-site GMP-histidine intermediate is the His429.

The protein belongs to the RtcB family. As to quaternary structure, catalytic component of the tRNA-splicing ligase complex. The cofactor is Mn(2+).

The catalysed reaction is a 3'-end 3'-phospho-ribonucleotide-RNA + a 5'-end dephospho-ribonucleoside-RNA + GTP = a ribonucleotidyl-ribonucleotide-RNA + GMP + diphosphate. The enzyme catalyses a 3'-end 2',3'-cyclophospho-ribonucleotide-RNA + a 5'-end dephospho-ribonucleoside-RNA + GTP + H2O = a ribonucleotidyl-ribonucleotide-RNA + GMP + diphosphate + H(+). Functionally, catalytic subunit of the tRNA-splicing ligase complex that acts by directly joining spliced tRNA halves to mature-sized tRNAs by incorporating the precursor-derived splice junction phosphate into the mature tRNA as a canonical 3',5'-phosphodiester. May act as an RNA ligase with broad substrate specificity, and may function toward other RNAs. The sequence is that of RNA-splicing ligase RtcB homolog from Aedes aegypti (Yellowfever mosquito).